Reading from the N-terminus, the 284-residue chain is Shikimate kinase (284 aa).

ATP is bound at residue 85–95 (PLAAGLKSSSA).

This sequence belongs to the GHMP kinase family. Archaeal shikimate kinase subfamily.

The protein resides in the cytoplasm. The enzyme catalyses shikimate + ATP = 3-phosphoshikimate + ADP + H(+). It functions in the pathway metabolic intermediate biosynthesis; chorismate biosynthesis; chorismate from D-erythrose 4-phosphate and phosphoenolpyruvate: step 5/7. The polypeptide is Shikimate kinase (Halobacterium salinarum (strain ATCC 29341 / DSM 671 / R1)).